The chain runs to 316 residues: MPTKGDYQPPKDGILSKLPESAVPYGELLRIHRPLGYYLNISPYVVGVAYTAAISPVTLPSTFLLGRLVILSLWGFCIRSAGCAWNDLIDMDIDRQVSRTKLRPLPRGAVSPSGAALLAAFMFGCGGSLLLLLPSQCAFEAAIVVFFALLYPFGKRFSDHPQLILTNIAWAIPMAMSSLDMSPLDFPIPTLAMSFSIASVIVMIDIVYACQDAEEDKKVGARSMAVRYMEITDQIAYGLFFSGTLSLLVGGILRGLGFPFLIFSVGGHFLGFLRFLRASLGKGAKSALVESQAKSSCLLATMLLVFGLCFEYCVRL.

A run of 9 helical transmembrane segments spans residues Val45–Leu65, Val69–Ile89, Gly114–Pro134, Ser135–Lys155, Leu163–Pro183, Ile188–Tyr208, Ile231–Leu253, Gly257–Leu276, and Ser296–Leu316.

This sequence belongs to the UbiA prenyltransferase family. Requires Mg(2+) as cofactor.

It is found in the membrane. It carries out the reaction 3,5-dimethylorsellinate + (2E,6E)-farnesyl diphosphate = (3R)-3-farnesyl-6-hydroxy-2,3,5-trimethyl-4-oxocyclohexa-1,5-diene-1-carboxylate + diphosphate + H(+). The protein operates within secondary metabolite biosynthesis; terpenoid biosynthesis. Functionally, polyprenyl transferase; part of the gene cluster that mediates the biosynthesis of paraherquonin, a meroterpenoid with a unique, highly congested hexacyclic molecular architecture. The first step of the pathway is the synthesis of 3,5-dimethylorsellinic acid (DMOA) by the polyketide synthase prhL. Synthesis of DMOA is followed by farnesylation by the prenyltransferase prhE, methylesterification by the methyl-transferase prhM, epoxidation of the prenyl chain by the flavin-dependent monooxygenase prhF, and cyclization of the farnesyl moiety by the terpene cyclase prhH, to yield the tetracyclic intermediate, protoaustinoid A. The short chain dehydrogenase prhI then oxidizes the C-3 alcohol group of the terpene cyclase product to transform protoaustinoid A into protoaustinoid B. The FAD-binding monooxygenase prhJ catalyzes the oxidation of protoaustinoid B into preaustinoid A which is further oxidized into preaustinoid A1 by FAD-binding monooxygenase phrK. Finally, prhA leads to berkeleydione via the berkeleyone B intermediate. PrhA is a multifunctional dioxygenase that first desaturates at C5-C6 to form berkeleyone B, followed by rearrangement of the A/B-ring to form the cycloheptadiene moiety in berkeleydione. Berkeleydione serves as the key intermediate for the biosynthesis of paraherquonin as well as many other meroterpenoids. The cytochrome P450 monooxygenases prhB, prhD, and prhN, as well as the isomerase prhC, are probably involved in the late stage of paraherquonin biosynthesis, after the production of berkeleydione. Especially prhC might be a multifunctional enzyme that catalyzes the D-ring expansion via intramolecular methoxy rearrangement, as well as the hydrolysis of the expanded D-ring. The polypeptide is Polyprenyl transferase prhE (Penicillium brasilianum).